The following is a 97-amino-acid chain: Small ribosomal subunit protein bS16c (97 aa).

It belongs to the bacterial ribosomal protein bS16 family.

Its subcellular location is the plastid. It localises to the chloroplast. This Piper cenocladum (Ant piper) protein is Small ribosomal subunit protein bS16c.